Here is a 150-residue protein sequence, read N- to C-terminus: Large-conductance mechanosensitive channel (150 aa).

The next 2 membrane-spanning stretches (helical) occupy residues 14 to 34 (VIDL…VTSL) and 81 to 101 (GLFI…FIVI).

This sequence belongs to the MscL family. In terms of assembly, homopentamer.

It localises to the cell membrane. Channel that opens in response to stretch forces in the membrane lipid bilayer. May participate in the regulation of osmotic pressure changes within the cell. The protein is Large-conductance mechanosensitive channel of Desulfitobacterium hafniense (strain DSM 10664 / DCB-2).